A 159-amino-acid polypeptide reads, in one-letter code: Phosphopantetheine adenylyltransferase (159 aa).

A substrate-binding site is contributed by Thr10. ATP-binding positions include 10–11 and His18; that span reads TF. 3 residues coordinate substrate: Lys42, Met74, and Arg88. Residues 89-91, Glu99, and 124-130 each bind ATP; these read GLR and WSFISSS.

Belongs to the bacterial CoaD family. In terms of assembly, homohexamer. Requires Mg(2+) as cofactor.

Its subcellular location is the cytoplasm. The catalysed reaction is (R)-4'-phosphopantetheine + ATP + H(+) = 3'-dephospho-CoA + diphosphate. Its pathway is cofactor biosynthesis; coenzyme A biosynthesis; CoA from (R)-pantothenate: step 4/5. Reversibly transfers an adenylyl group from ATP to 4'-phosphopantetheine, yielding dephospho-CoA (dPCoA) and pyrophosphate. The polypeptide is Phosphopantetheine adenylyltransferase (Pectobacterium carotovorum subsp. carotovorum (strain PC1)).